The following is a 419-amino-acid chain: Creatine kinase S-type, mitochondrial (419 aa).

The N-terminal 39 residues, 1-39, are a transit peptide targeting the mitochondrion; the sequence is MASAFSKLLTGRNASLLFTTLGTSALTTGYLLNRQKVSA. The tract at residues 40–64 is cardiolipin-binding; that stretch reads DAREQHKLFPPSADYPDLRKHNNCM. In terms of domain architecture, Phosphagen kinase N-terminal spans 46-132; the sequence is KLFPPSADYP…FDPVIKLRHN (87 aa). The region spanning 159 to 401 is the Phosphagen kinase C-terminal domain; the sequence is YVLSSRVRTG…NYLVDCEKKL (243 aa). Residues 162–166 and H225 each bind ATP; that span reads SSRVR. A Phosphotyrosine modification is found at Y255. ATP-binding positions include R270, R326, 354 to 359, and D369; that span reads RGTGGV. At T356 the chain carries Phosphothreonine.

It belongs to the ATP:guanido phosphotransferase family. Exists as an octamer composed of four CKMT2 homodimers.

It is found in the mitochondrion inner membrane. The enzyme catalyses creatine + ATP = N-phosphocreatine + ADP + H(+). Functionally, reversibly catalyzes the transfer of phosphate between ATP and various phosphogens (e.g. creatine phosphate). Creatine kinase isoenzymes play a central role in energy transduction in tissues with large, fluctuating energy demands, such as skeletal muscle, heart, brain and spermatozoa. The chain is Creatine kinase S-type, mitochondrial (Ckmt2) from Mus musculus (Mouse).